Here is a 178-residue protein sequence, read N- to C-terminus: Cytochrome b6-f complex iron-sulfur subunit (178 aa).

A helical membrane pass occupies residues 20–42; sequence LLTFGSVTGVALGALYPVVNYFI. The 91-residue stretch at 71–161 folds into the Rieske domain; that stretch reads THPAGDRSLV…VSVENDNVFV (91 aa). Residues cysteine 107, histidine 109, cysteine 125, and histidine 128 each contribute to the [2Fe-2S] cluster site. A disulfide bond links cysteine 112 and cysteine 127.

Belongs to the Rieske iron-sulfur protein family. As to quaternary structure, the 4 large subunits of the cytochrome b6-f complex are cytochrome b6, subunit IV (17 kDa polypeptide, PetD), cytochrome f and the Rieske protein, while the 4 small subunits are PetG, PetL, PetM and PetN. The complex functions as a dimer. [2Fe-2S] cluster serves as cofactor.

The protein localises to the cellular thylakoid membrane. The catalysed reaction is 2 oxidized [plastocyanin] + a plastoquinol + 2 H(+)(in) = 2 reduced [plastocyanin] + a plastoquinone + 4 H(+)(out). Component of the cytochrome b6-f complex, which mediates electron transfer between photosystem II (PSII) and photosystem I (PSI), cyclic electron flow around PSI, and state transitions. This chain is Cytochrome b6-f complex iron-sulfur subunit, found in Synechococcus sp. (strain WH7803).